Reading from the N-terminus, the 340-residue chain is Ava biosynthesis cluster protein G (340 aa).

4 helical membrane-spanning segments follow: residues 15 to 35, 81 to 101, 118 to 138, and 148 to 168; these read WSAFWLWAIIGGYFAAFNIWN, FMISTDFITSACSVIALLQFV, AFFVMMGFGAPSGIMVAVHAF, and LSIMLTGVLTICFLATSFLCI. Asn171 is a glycosylation site (N-linked (GlcNAc...) asparagine). Transmembrane regions (helical) follow at residues 219–239 and 315–335; these read FSSVYLIIPEVMNWTLGYVAF and SALTAVCLLLRYVGLILWLQI.

The protein localises to the membrane. Its pathway is secondary metabolite biosynthesis. Part of the cluster that mediates the biosynthesis of a highly modified cyclo-arginine-tryptophan dipeptide (cRW). The first step of the pathway is perfornmed by the arginine-containing cyclodipeptide synthase (RCPDS) avaA that acts as the scaffold-generating enzyme and is responsible for formation of the cyclo-Arg-Trp (cRW) diketopiperazine. AvaB then acts as a multifunctional flavoenzyme that is responsible for generating the cyclo-Arg-formylkynurenine DKP, which can be deformylated by avaC. AvaB then further catalyzes an additional N-oxidation followed by cyclization and dehydration. The next step is an N-acetylation of the guanidine group catalyzed by the arginine N-acetyltransferase avaD. The roles of the additional enzymes identified within the ava cluster still have to be determined. In Aspergillus versicolor, this protein is Ava biosynthesis cluster protein G.